The sequence spans 153 residues: Transcriptional repressor NrdR (153 aa).

A zinc finger lies at cysteine 3 to cysteine 34. In terms of domain architecture, ATP-cone spans leucine 49–valine 139.

Belongs to the NrdR family. Requires Zn(2+) as cofactor.

Its function is as follows. Negatively regulates transcription of bacterial ribonucleotide reductase nrd genes and operons by binding to NrdR-boxes. The polypeptide is Transcriptional repressor NrdR (Bacillus mycoides (strain KBAB4) (Bacillus weihenstephanensis)).